Here is a 208-residue protein sequence, read N- to C-terminus: Small ribosomal subunit protein uS3 (208 aa).

The 69-residue stretch at 38–106 (IRDYIKARLY…EILIDIQEVR (69 aa)) folds into the KH type-2 domain.

Belongs to the universal ribosomal protein uS3 family. As to quaternary structure, part of the 30S ribosomal subunit. Forms a tight complex with proteins S10 and S14.

Binds the lower part of the 30S subunit head. Binds mRNA in the 70S ribosome, positioning it for translation. The sequence is that of Small ribosomal subunit protein uS3 from Syntrophobacter fumaroxidans (strain DSM 10017 / MPOB).